The following is a 276-amino-acid chain: HUWE1-associated protein modifying stress responses 2 (276 aa).

3 disordered regions span residues 146-182 (GKVP…TPVG), 204-238 (ISMR…PNSL), and 252-276 (VRKR…NRMV). A compositionally biased stretch (pro residues) spans 149 to 165 (PPTPQPPRTPRMSPRPP). Composition is skewed to low complexity over residues 166-179 (AAAS…ESGT) and 208-219 (SGPPGSSSQDGG). The tract at residues 252 to 276 (VRKRTSAQFGDGSADSPLHKRNRMV) is nuclear localization signal.

The protein belongs to the HAPSTR1 family. As to quaternary structure, homooligomer. Heterooligomer with HAPSTR1; the interaction is direct and stabilizes HAPSTR1 independently of HUWE1. Interacts with HUWE1.

Its subcellular location is the nucleus. Together with HAPSTR1 plays a central regulatory role in the cellular response to molecular stressors, such as DNA damage, nutrient scarcity, and protein misfolding. Regulates these multiple stress response signaling pathways by stabilizing HAPSTR1, but also independently of HAPSTR1. This chain is HUWE1-associated protein modifying stress responses 2, found in Mus musculus (Mouse).